Reading from the N-terminus, the 325-residue chain is Glycerol-3-phosphate dehydrogenase [NAD(P)+] (325 aa).

The NADPH site is built by Trp11, Arg30, and Lys103. Residues Lys103, Gly131, and Ser133 each contribute to the sn-glycerol 3-phosphate site. Position 135 (Ala135) interacts with NADPH. Residues Lys186, Asp242, Ser252, Arg253, and Asn254 each contribute to the sn-glycerol 3-phosphate site. The Proton acceptor role is filled by Lys186. An NADPH-binding site is contributed by Arg253. The NADPH site is built by Val279 and Glu281.

The protein belongs to the NAD-dependent glycerol-3-phosphate dehydrogenase family.

The protein localises to the cytoplasm. The enzyme catalyses sn-glycerol 3-phosphate + NAD(+) = dihydroxyacetone phosphate + NADH + H(+). The catalysed reaction is sn-glycerol 3-phosphate + NADP(+) = dihydroxyacetone phosphate + NADPH + H(+). It functions in the pathway membrane lipid metabolism; glycerophospholipid metabolism. In terms of biological role, catalyzes the reduction of the glycolytic intermediate dihydroxyacetone phosphate (DHAP) to sn-glycerol 3-phosphate (G3P), the key precursor for phospholipid synthesis. This Wolbachia pipientis subsp. Culex pipiens (strain wPip) protein is Glycerol-3-phosphate dehydrogenase [NAD(P)+].